A 357-amino-acid polypeptide reads, in one-letter code: Alanine racemase (357 aa).

The Proton acceptor; specific for D-alanine role is filled by Lys-34. N6-(pyridoxal phosphate)lysine is present on Lys-34. Arg-130 contacts substrate. Tyr-253 (proton acceptor; specific for L-alanine) is an active-site residue. Met-301 contributes to the substrate binding site.

This sequence belongs to the alanine racemase family. It depends on pyridoxal 5'-phosphate as a cofactor.

It catalyses the reaction L-alanine = D-alanine. Its pathway is amino-acid biosynthesis; D-alanine biosynthesis; D-alanine from L-alanine: step 1/1. Functionally, catalyzes the interconversion of L-alanine and D-alanine. May also act on other amino acids. This chain is Alanine racemase (alr), found in Mannheimia succiniciproducens (strain KCTC 0769BP / MBEL55E).